The chain runs to 464 residues: Vitamin D3 hydroxylase-associated protein (464 aa).

Active-site charge relay system residues include K150 and S225. S249 acts as the Acyl-ester intermediate in catalysis.

It belongs to the amidase family. As to expression, kidney.

It localises to the mitochondrion inner membrane. In terms of biological role, may have a vitamin D3 hydroxylase regulatory function. The polypeptide is Vitamin D3 hydroxylase-associated protein (Gallus gallus (Chicken)).